The chain runs to 439 residues: MSIDVNWRSATYGPDGEALAERIRSFIHDRFQQVALPRFIRSVQVHAFDFGTIPPELEIKDFCEPFADFYEEDDDDHTSDASEELGSEHSSQWNRTHPELNEPSYREDTAVNHSLRDPFPDGFPTSPLRSPLGEHLNPHFLPRAGTPGIPGGTSTLGYHLMSLGGLSGTQTPLAAVAGGNPFASGWSDSGMGPGNRGRSERHAGMKHQRAEPEIDTSNSTSRPSTANTLPSHPSSSSKNSGQGATGRNDHPSLHAGEHIEDPVAPGHLPLPPRMRERRPEDFQVLCHVKYAGDVRLSLTAEILLDYPMPSFVGLPLKLNVTGITFDGVAVIAYIRKRVHFCFLSAEDADALIGSEQQQQQESAGDDHRPQSRPDSSASASQKRHGGLLQEIRVESEIGRKEDGKQVLKNVGKVERFVLAQVRRIFEEELVYPSFWTFLI.

The SMP-LTD domain occupies 1–439 (MSIDVNWRSA…VYPSFWTFLI (439 aa)). Residues 70-85 (YEEDDDDHTSDASEEL) are compositionally biased toward acidic residues. Disordered regions lie at residues 70-102 (YEED…ELNE), 184-274 (SGWS…PPRM), and 353-386 (GSEQ…RHGG). Positions 197–212 (GRSERHAGMKHQRAEP) are enriched in basic and acidic residues. The segment covering 215 to 230 (DTSNSTSRPSTANTLP) has biased composition (polar residues). Positions 231 to 240 (SHPSSSSKNS) are enriched in low complexity. A compositionally biased stretch (basic and acidic residues) spans 247–261 (RNDHPSLHAGEHIED).

This sequence belongs to the MDM12 family. Component of the ER-mitochondria encounter structure (ERMES) or MDM complex, composed of mmm1, mdm10, mdm12 and mdm34. A mmm1 homodimer associates with one molecule of mdm12 on each side in a pairwise head-to-tail manner, and the SMP-LTD domains of mmm1 and mdm12 generate a continuous hydrophobic tunnel for phospholipid trafficking.

It localises to the mitochondrion outer membrane. It is found in the endoplasmic reticulum membrane. In terms of biological role, component of the ERMES/MDM complex, which serves as a molecular tether to connect the endoplasmic reticulum (ER) and mitochondria. Components of this complex are involved in the control of mitochondrial shape and protein biogenesis, and function in nonvesicular lipid trafficking between the ER and mitochondria. Mdm12 is required for the interaction of the ER-resident membrane protein mmm1 and the outer mitochondrial membrane-resident beta-barrel protein mdm10. The mdm12-mmm1 subcomplex functions in the major beta-barrel assembly pathway that is responsible for biogenesis of all mitochondrial outer membrane beta-barrel proteins, and acts in a late step after the SAM complex. The mdm10-mdm12-mmm1 subcomplex further acts in the TOM40-specific pathway after the action of the mdm12-mmm1 complex. Essential for establishing and maintaining the structure of mitochondria and maintenance of mtDNA nucleoids. In Neosartorya fischeri (strain ATCC 1020 / DSM 3700 / CBS 544.65 / FGSC A1164 / JCM 1740 / NRRL 181 / WB 181) (Aspergillus fischerianus), this protein is Mitochondrial distribution and morphology protein 12.